The following is a 205-amino-acid chain: Thymidylate kinase (205 aa).

11–18 contacts ATP; sequence GPEGSGKT.

The protein belongs to the thymidylate kinase family.

It carries out the reaction dTMP + ATP = dTDP + ADP. Functionally, phosphorylation of dTMP to form dTDP in both de novo and salvage pathways of dTTP synthesis. This is Thymidylate kinase from Clostridium novyi (strain NT).